A 365-amino-acid polypeptide reads, in one-letter code: Putrescine 2-hydroxylase (365 aa).

A Rieske domain is found at 44–141; sequence GHELMVPEVG…LQNWNGLLFE (98 aa). 4 residues coordinate [2Fe-2S] cluster: Cys-81, His-83, Cys-100, and His-103.

Belongs to the bacterial ring-hydroxylating dioxygenase alpha subunit family. [2Fe-2S] cluster is required as a cofactor.

Its function is as follows. Rieske-type iron sulfur protein that can catalyze in vitro the 2-hydroxylation of putrescine, forming 2-hydroxyputrescine. May be involved in the biosynthesis of the cyclic hydroxamate siderophore alcaligin. In Ralstonia nicotianae (strain ATCC BAA-1114 / GMI1000) (Ralstonia solanacearum), this protein is Putrescine 2-hydroxylase.